The sequence spans 342 residues: Cathepsin B-like cysteine proteinase (342 aa).

An N-terminal signal peptide occupies residues 1–17 (MLKIAVYIVSLFTFLEA). Positions 18 to 89 (HVTTRNNQRI…TVDHHDLNVE (72 aa)) are cleaved as a propeptide — activation peptide. Cystine bridges form between C103-C132, C115-C159, C151-C217, C152-C155, C188-C221, and C196-C207. Residue C118 is part of the active site. Residues H288 and N308 contribute to the active site.

Belongs to the peptidase C1 family. Intestine (gut).

Functionally, thiol protease. Has a role as a digestive enzyme. This chain is Cathepsin B-like cysteine proteinase (CATB), found in Schistosoma japonicum (Blood fluke).